A 162-amino-acid polypeptide reads, in one-letter code: MNLNELRDNAGSRYRKKRLGRGIGSGKGKTSGKGVKGQKAREGVSLNGFEGGQLPLYRRLPKRGFKNIFRKEYAPVNLGALDKAIADGKIDAGTVVTEDVLRTAGLVGSGKFAGVRLLAKGELARAVTIEVSGASATAVAAVEKAGGSVRTKAARDEAQAPA.

The span at Met-1 to Ala-10 shows a compositional bias: basic and acidic residues. Positions Met-1 to Lys-39 are disordered. Positions Arg-21–Val-35 are enriched in gly residues.

This sequence belongs to the universal ribosomal protein uL15 family. Part of the 50S ribosomal subunit.

Its function is as follows. Binds to the 23S rRNA. The sequence is that of Large ribosomal subunit protein uL15 from Gluconacetobacter diazotrophicus (strain ATCC 49037 / DSM 5601 / CCUG 37298 / CIP 103539 / LMG 7603 / PAl5).